A 630-amino-acid polypeptide reads, in one-letter code: MKGQETRGFQSEVKQLLQLMIHSLYSNKEIFLRELISNASDAADKLRFRALSVPKLYENDGELRVRLSFDKEKRCITISDNGIGMTRDEVIDNLGTIAKSGTKAFLESIGSDQAKDSQLIGQFGVGFYSAFIVSDKVTVRTRAAGASIDQGVFWESAGEGDYTIADIEKETRGTEITLHLREGEDEFLNDWRLRSVISKYSDHIALPVEIETKNKSEEEGEEDTVTWEKINKAQALWTRGKSEITDEEYKEFYKHISHDFTDPLIWSHNRVEGKQEYTSMLYIPSQAPWDMWNREHKHGLKLYVQRVFIMDDAEQFMPNYLRFVRGLIDSNDLPLNVSREILQDNSITRNLRNALTKRALQMLDKLAKDDAEKYQQFWQQFGLVMKEGPAEDSTNKEAIAKLLRFASTHNDSSAQTVSLEEYVSRMTEGQDKIYYITADSYAAAKNSPHLELFRKKGIEVLLLSERIDEWMMGYLTDFDGKKFQSVSKADESLDKLADENKAEQEEIEKQLEPFVERVKTLLGDRVKEVKLTHRLTDTPAIVTTNVDEMSTQMAKLFAAAGQQVPDVKYNFELNPDHQLVKLAADISDEVQFADWIELLLDQALFAERGTLEDPNQFIRRMNQLLLSEKA.

The tract at residues 1 to 339 (MKGQETRGFQ…SNDLPLNVSR (339 aa)) is a; substrate-binding. Positions 340–555 (EILQDNSITR…VDEMSTQMAK (216 aa)) are b. The interval 556 to 630 (LFAAAGQQVP…MNQLLLSEKA (75 aa)) is c.

This sequence belongs to the heat shock protein 90 family. As to quaternary structure, homodimer.

The protein resides in the cytoplasm. Functionally, molecular chaperone. Has ATPase activity. The polypeptide is Chaperone protein HtpG (Photorhabdus laumondii subsp. laumondii (strain DSM 15139 / CIP 105565 / TT01) (Photorhabdus luminescens subsp. laumondii)).